The following is a 92-amino-acid chain: Acylphosphatase (92 aa).

The cysteines at positions 5 and 49 are disulfide-linked. An Acylphosphatase-like domain is found at 5-92; it reads CIIAWVYGRV…SGELTDFRIR (88 aa). Active-site residues include arginine 20 and asparagine 38.

This sequence belongs to the acylphosphatase family.

It catalyses the reaction an acyl phosphate + H2O = a carboxylate + phosphate + H(+). This is Acylphosphatase from Escherichia coli O6:H1 (strain CFT073 / ATCC 700928 / UPEC).